The sequence spans 449 residues: L10-interacting MYB domain-containing protein (449 aa).

In terms of domain architecture, Myb-like spans 162 to 225 (SNPQTKGYWS…YTRPQLKNHW (64 aa)). Residues 297–324 (TYTPPSRSRKKLLHNRSESPQWRDTTPL) form a disordered region. The span at 314–324 (ESPQWRDTTPL) shows a compositional bias: polar residues.

In terms of assembly, interacts with RPL10A. Expressed in seedlings, leaves, roots, stems and flowers.

The protein resides in the nucleus. Functionally, transcriptional repressor that associates with ribosomal protein promoters. The protein is L10-interacting MYB domain-containing protein of Arabidopsis thaliana (Mouse-ear cress).